We begin with the raw amino-acid sequence, 317 residues long: Protoheme IX farnesyltransferase (317 aa).

9 helical membrane passes run 43–63, 65–85, 119–139, 140–160, 168–188, 195–215, 238–258, 261–281, and 292–312; these read PISV…AGAT, PVSG…CAGA, ALYW…NLNP, IAWI…SLWL, IVIG…AVTG, VLIA…LAIF, LNWL…IYFV, WGLV…ALSV, and AWVL…SMMV.

It belongs to the UbiA prenyltransferase family. Protoheme IX farnesyltransferase subfamily. Interacts with CtaA.

The protein resides in the cell membrane. The catalysed reaction is heme b + (2E,6E)-farnesyl diphosphate + H2O = Fe(II)-heme o + diphosphate. It functions in the pathway porphyrin-containing compound metabolism; heme O biosynthesis; heme O from protoheme: step 1/1. Converts heme B (protoheme IX) to heme O by substitution of the vinyl group on carbon 2 of heme B porphyrin ring with a hydroxyethyl farnesyl side group. The polypeptide is Protoheme IX farnesyltransferase (Desulforudis audaxviator (strain MP104C)).